Here is a 275-residue protein sequence, read N- to C-terminus: Large ribosomal subunit protein uL2c (275 aa).

The segment at 225–256 (AMNAVDHPHGGGEGRSPIGRSQPSTPWGRPAL) is disordered.

The protein belongs to the universal ribosomal protein uL2 family. Part of the 50S ribosomal subunit.

Its subcellular location is the plastid. It is found in the chloroplast. In Cyanidium caldarium (Red alga), this protein is Large ribosomal subunit protein uL2c (rpl2).